The primary structure comprises 836 residues: Translation initiation factor IF-2 (836 aa).

The tract at residues Met-1 to Glu-234 is disordered. Residues Ser-18 to His-27 show a composition bias toward polar residues. Over residues Ser-50–Ser-60 the composition is skewed to low complexity. The segment covering Lys-88–Arg-156 has biased composition (basic and acidic residues). Positions Pro-167–Pro-176 are enriched in low complexity. The segment covering Ser-185 to Arg-206 has biased composition (basic and acidic residues). The region spanning Pro-333–Asp-501 is the tr-type G domain. The G1 stretch occupies residues Gly-342–Thr-349. Gly-342 to Thr-349 is a GTP binding site. A G2 region spans residues Gly-367–His-371. Positions Asp-389 to Gly-392 are G3. GTP-binding positions include Asp-389 to His-393 and Asn-443 to Asp-446. Positions Asn-443 to Asp-446 are G4. A G5 region spans residues Ser-479 to Lys-481.

The protein belongs to the TRAFAC class translation factor GTPase superfamily. Classic translation factor GTPase family. IF-2 subfamily.

The protein localises to the cytoplasm. One of the essential components for the initiation of protein synthesis. Protects formylmethionyl-tRNA from spontaneous hydrolysis and promotes its binding to the 30S ribosomal subunits. Also involved in the hydrolysis of GTP during the formation of the 70S ribosomal complex. This is Translation initiation factor IF-2 from Cereibacter sphaeroides (strain ATCC 17029 / ATH 2.4.9) (Rhodobacter sphaeroides).